Reading from the N-terminus, the 673-residue chain is DNA ligase (673 aa).

Residues 35–39, 84–85, and glutamate 115 each bind NAD(+); these read DAQYD and SL. The active-site N6-AMP-lysine intermediate is the lysine 117. Arginine 138, glutamate 178, lysine 294, and lysine 318 together coordinate NAD(+). Zn(2+)-binding residues include cysteine 412, cysteine 415, cysteine 430, and cysteine 435. Residues 594 to 673 enclose the BRCT domain; that stretch reads LQSDRLAGKS…DELHALLVDE (80 aa).

This sequence belongs to the NAD-dependent DNA ligase family. LigA subfamily. Requires Mg(2+) as cofactor. Mn(2+) serves as cofactor.

The catalysed reaction is NAD(+) + (deoxyribonucleotide)n-3'-hydroxyl + 5'-phospho-(deoxyribonucleotide)m = (deoxyribonucleotide)n+m + AMP + beta-nicotinamide D-nucleotide.. Its function is as follows. DNA ligase that catalyzes the formation of phosphodiester linkages between 5'-phosphoryl and 3'-hydroxyl groups in double-stranded DNA using NAD as a coenzyme and as the energy source for the reaction. It is essential for DNA replication and repair of damaged DNA. This is DNA ligase from Herpetosiphon aurantiacus (strain ATCC 23779 / DSM 785 / 114-95).